The following is a 52-amino-acid chain: DNA-directed RNA polymerase subunit Rpo12 (52 aa).

Positions 13, 30, and 33 each coordinate Zn(2+).

The protein belongs to the archaeal Rpo12/eukaryotic RPC10 RNA polymerase subunit family. As to quaternary structure, part of the RNA polymerase complex. Requires Zn(2+) as cofactor.

It localises to the cytoplasm. The catalysed reaction is RNA(n) + a ribonucleoside 5'-triphosphate = RNA(n+1) + diphosphate. Functionally, DNA-dependent RNA polymerase (RNAP) catalyzes the transcription of DNA into RNA using the four ribonucleoside triphosphates as substrates. This Pyrobaculum neutrophilum (strain DSM 2338 / JCM 9278 / NBRC 100436 / V24Sta) (Thermoproteus neutrophilus) protein is DNA-directed RNA polymerase subunit Rpo12.